A 468-amino-acid polypeptide reads, in one-letter code: Putative magnesium transporter MRS2-G (468 aa).

Disordered regions lie at residues 1-76 (MGRR…AGKV) and 183-204 (GQPGGDDHGEKHDDSHGDQVPR). Low complexity-rich tracts occupy residues 14–23 (ASNASTSSST) and 31–45 (RLPSLTRPRASSSPS). The span at 46-67 (PASPSPPPPSASHPAPPSPPLA) shows a compositional bias: pro residues. A compositionally biased stretch (basic and acidic residues) spans 187 to 201 (GDDHGEKHDDSHGDQ). Transmembrane regions (helical) follow at residues 402-422 (LTLTIASFGIAVNTFIAGAFA) and 437-457 (FFWPFVGGTSSGCFMICIVLL).

It belongs to the CorA metal ion transporter (MIT) (TC 1.A.35.5) family. Interacts with CYCB2-2.

Its subcellular location is the membrane. Its function is as follows. Putative magnesium transporter. In Oryza sativa subsp. japonica (Rice), this protein is Putative magnesium transporter MRS2-G (MRS2-G).